We begin with the raw amino-acid sequence, 674 residues long: Pentatricopeptide repeat-containing protein At4g17616 (674 aa).

5 PPR repeats span residues 409–443 (GSRL…GYPM), 444–478 (ELAT…GLIT), 519–553 (MLYE…KIPP), 554–584 (TVQS…IKRN), and 593–627 (TQDL…DMYN).

It belongs to the PPR family. P subfamily.

This Arabidopsis thaliana (Mouse-ear cress) protein is Pentatricopeptide repeat-containing protein At4g17616.